Consider the following 215-residue polypeptide: Large ribosomal subunit protein uL16 (215 aa).

A disordered region spans residues 1–22; sequence MGRRPARCYRQPKGKPYPKSRY.

This sequence belongs to the universal ribosomal protein uL16 family.

The chain is Large ribosomal subunit protein uL16 (RPL10) from Tetrahymena thermophila (strain SB210).